The following is a 585-amino-acid chain: Isocitrate dehydrogenase kinase/phosphatase (585 aa).

ATP contacts are provided by residues 315–321 (APGVKGM) and K336. D371 is an active-site residue.

This sequence belongs to the AceK family.

The protein localises to the cytoplasm. The enzyme catalyses L-seryl-[isocitrate dehydrogenase] + ATP = O-phospho-L-seryl-[isocitrate dehydrogenase] + ADP + H(+). Its function is as follows. Bifunctional enzyme which can phosphorylate or dephosphorylate isocitrate dehydrogenase (IDH) on a specific serine residue. This is a regulatory mechanism which enables bacteria to bypass the Krebs cycle via the glyoxylate shunt in response to the source of carbon. When bacteria are grown on glucose, IDH is fully active and unphosphorylated, but when grown on acetate or ethanol, the activity of IDH declines drastically concomitant with its phosphorylation. The protein is Isocitrate dehydrogenase kinase/phosphatase of Photorhabdus laumondii subsp. laumondii (strain DSM 15139 / CIP 105565 / TT01) (Photorhabdus luminescens subsp. laumondii).